We begin with the raw amino-acid sequence, 307 residues long: uncharacterized protein (307 aa).

The signal sequence occupies residues 1-25; the sequence is MKFQKRNIQLVLILLLILNNCFINS. The disordered stretch occupies residues 60-90; that stretch reads ENNNKNNNNNNNNNNNNNNNNKNSKVKNDDS. Positions 63-82 are enriched in low complexity; sequence NKNNNNNNNNNNNNNNNNKN. Asn-124 and Asn-173 each carry an N-linked (GlcNAc...) asparagine glycan. 2 helical membrane-spanning segments follow: residues 244-264 and 275-295; these read IIFA…YYLA and IIGV…TIVI.

Its subcellular location is the membrane. This is an uncharacterized protein from Dictyostelium discoideum (Social amoeba).